The following is a 112-amino-acid chain: MKTLFTSVVLCGALVVSSSFAEEKATXQTAQSVVTTQAEAQVAPAVVSDKLNINTATASEIQKSLTGIGAKKAEAIVQYREKHGNFXNAEQLLEVQGIGKATLEKNRDRIIF.

The first 21 residues, 1–21, serve as a signal peptide directing secretion; the sequence is MKTLFTSVVLCGALVVSSSFA. 2 consecutive HhH domains span residues 49 to 79 and 80 to 109; these read DKLN…IVQY and REKH…NRDR.

This is an uncharacterized protein from Haemophilus influenzae (strain ATCC 51907 / DSM 11121 / KW20 / Rd).